The chain runs to 280 residues: Succinate dehydrogenase [ubiquinone] iron-sulfur subunit 2, mitochondrial (280 aa).

The N-terminal 28 residues, 1–28 (MAFGLIGRVVGTKSSRLSTAARLIPARW), are a transit peptide targeting the mitochondrion. The 2Fe-2S ferredoxin-type domain occupies 51–140 (FQIYRWNPDN…ETTITPLPHM (90 aa)). [2Fe-2S] cluster is bound by residues Cys-101, Cys-106, and Cys-121. Residues 183–213 (DRAKLDGMYECILCACCSTSCPSYWWNPESY) form the 4Fe-4S ferredoxin-type domain. [4Fe-4S] cluster contacts are provided by Cys-193, Cys-196, and Cys-199. Cys-203 lines the [3Fe-4S] cluster pocket. A ubiquinone is bound at residue Trp-208. The [3Fe-4S] cluster site is built by Cys-250 and Cys-256. Cys-260 is a binding site for [4Fe-4S] cluster.

It belongs to the succinate dehydrogenase/fumarate reductase iron-sulfur protein family. As to quaternary structure, component of complex II composed of eight subunits in plants: four classical SDH subunits SDH1, SDH2, SDH3 and SDH4 (a flavoprotein (FP), an iron-sulfur protein (IP), and a cytochrome b composed of a large and a small subunit.), as well as four subunits unknown in mitochondria from bacteria and heterotrophic eukaryotes. The cofactor is [2Fe-2S] cluster. Requires [3Fe-4S] cluster as cofactor. [4Fe-4S] cluster is required as a cofactor. As to expression, ubiquitous. Preferentially expressed in flowers, inflorescences and root tips.

It is found in the mitochondrion inner membrane. It carries out the reaction a quinone + succinate = fumarate + a quinol. Its pathway is carbohydrate metabolism; tricarboxylic acid cycle; fumarate from succinate (eukaryal route): step 1/1. Iron-sulfur protein (IP) subunit of succinate dehydrogenase (SDH) that is involved in complex II of the mitochondrial electron transport chain and is responsible for transferring electrons from succinate to ubiquinone (coenzyme Q). This Arabidopsis thaliana (Mouse-ear cress) protein is Succinate dehydrogenase [ubiquinone] iron-sulfur subunit 2, mitochondrial (SDH2-2).